Reading from the N-terminus, the 297-residue chain is Coiled-coil domain-containing protein 196 (297 aa).

A coiled-coil region spans residues 83–117 (ESSVMELLKEAEEMKQNLERKNKMLRKEMEMLWNK). Positions 122-161 (EELSDQQKAPQTKNKADLQDGKAPKSPSSPRKTESELEKS) are disordered. Basic and acidic residues-rich tracts occupy residues 135–144 (NKADLQDGKA) and 152–161 (RKTESELEKS).

The protein is Coiled-coil domain-containing protein 196 of Homo sapiens (Human).